The following is a 348-amino-acid chain: MAKTYYDHDADLALIQQKKVAIIGYGSQGHAHALGLKDSGVEVRVGLAPNSRSIEKAKKAGLETGTVAEVAAWADVIMILAPDTAQAAIYEESIAPHLKAGKTLMFAHGFNIRYDAIQPPKDVDVSLVAPKAPGHRVREVFVEGGGTPGLVAVHQDASGQALALALAYAKAIGCTRAGVLETTFKEETETDLFGEQAVLCGGTAALVKAGFETLVNAGYQPEVAYFECLHELKLIVDLMYRGGLAYMRYSISDTAEWGDYVAGPRIVTDETRAAMKKLLTDIQDGTFAKRWIEENKTGRKELDAIRAQEAKHPIETVGEKLRAAMPFLDPVTVKDGYPQPAGAKPKEA.

The KARI N-terminal Rossmann domain maps to 2 to 182 (AKTYYDHDAD…GCTRAGVLET (181 aa)). NADP(+)-binding positions include 25 to 28 (YGSQ), serine 51, serine 53, and 83 to 86 (DTAQ). Histidine 108 is an active-site residue. Residue glycine 134 coordinates NADP(+). Positions 183–328 (TFKEETETDL…EKLRAAMPFL (146 aa)) constitute a KARI C-terminal knotted domain. Mg(2+) contacts are provided by aspartate 191, glutamate 195, glutamate 227, and glutamate 231. Serine 252 is a binding site for substrate.

It belongs to the ketol-acid reductoisomerase family. Mg(2+) serves as cofactor.

It catalyses the reaction (2R)-2,3-dihydroxy-3-methylbutanoate + NADP(+) = (2S)-2-acetolactate + NADPH + H(+). The catalysed reaction is (2R,3R)-2,3-dihydroxy-3-methylpentanoate + NADP(+) = (S)-2-ethyl-2-hydroxy-3-oxobutanoate + NADPH + H(+). Its pathway is amino-acid biosynthesis; L-isoleucine biosynthesis; L-isoleucine from 2-oxobutanoate: step 2/4. The protein operates within amino-acid biosynthesis; L-valine biosynthesis; L-valine from pyruvate: step 2/4. Involved in the biosynthesis of branched-chain amino acids (BCAA). Catalyzes an alkyl-migration followed by a ketol-acid reduction of (S)-2-acetolactate (S2AL) to yield (R)-2,3-dihydroxy-isovalerate. In the isomerase reaction, S2AL is rearranged via a Mg-dependent methyl migration to produce 3-hydroxy-3-methyl-2-ketobutyrate (HMKB). In the reductase reaction, this 2-ketoacid undergoes a metal-dependent reduction by NADPH to yield (R)-2,3-dihydroxy-isovalerate. This Acidobacterium capsulatum (strain ATCC 51196 / DSM 11244 / BCRC 80197 / JCM 7670 / NBRC 15755 / NCIMB 13165 / 161) protein is Ketol-acid reductoisomerase (NADP(+)).